We begin with the raw amino-acid sequence, 307 residues long: Heme A synthase (307 aa).

The Cytoplasmic portion of the chain corresponds to 1–8 (MQHNRYLK). The helical transmembrane segment at 9 to 29 (WFAVAATVGMLLILLGGALVT) threads the bilayer. Over 30-56 (KTDSGLGCGRNWPDCNGSLIPKEITPE) the chain is Extracellular. The cysteines at positions 37 and 44 are disulfide-linked. A helical transmembrane segment spans residues 57 to 77 (VLIEFSHRLVTGVVSISILVL). Residue E60 is part of the active site. H63 contacts heme o. Over 78–92 (TVWTWRKLGHIREVK) the chain is Cytoplasmic. The helical transmembrane segment at 93-113 (LLGFLAMFFLIAQALIGAAQV) threads the bilayer. Residues 114–123 (LWGQGDFILA) are Extracellular-facing. The helical transmembrane segment at 124-144 (LHFGISLISFAAVLLLSMIVF) threads the bilayer. H125 contributes to the heme o binding site. Over 145–161 (EVDRKFDADNVFIGKKL) the chain is Cytoplasmic. A helical transmembrane segment spans residues 162 to 182 (RWHTIAVTIYSYLVVYTGALV). Over 183 to 218 (RHTDSSLICPDWPFCYNETPLASPNNMYEWVQMGHR) the chain is Extracellular. C191 and C197 are disulfide-bonded. Position 217 (H217) interacts with heme b. Residues 219–239 (LAVLIIFIWIAYITWHAVKEY) form a helical membrane-spanning segment. The Cytoplasmic segment spans residues 240–247 (KNQRVVYY). A helical transmembrane segment spans residues 248-268 (GWIIAFTIVFLQVIAGMLVVL). Topologically, residues 269–276 (TKLNLTVA) are extracellular. A helical transmembrane segment spans residues 277–297 (LMHSLLISLLFGLLCYMIMLV). Residue H279 participates in heme b binding. Residues 298–307 (ARSNYNEKMK) are Cytoplasmic-facing.

The protein belongs to the COX15/CtaA family. Type 1 subfamily. In terms of assembly, interacts with CtaB. The cofactor is heme b.

Its subcellular location is the cell membrane. The catalysed reaction is Fe(II)-heme o + 2 A + H2O = Fe(II)-heme a + 2 AH2. The protein operates within porphyrin-containing compound metabolism; heme A biosynthesis; heme A from heme O: step 1/1. Functionally, catalyzes the conversion of heme O to heme A by two successive hydroxylations of the methyl group at C8. The first hydroxylation forms heme I, the second hydroxylation results in an unstable dihydroxymethyl group, which spontaneously dehydrates, resulting in the formyl group of heme A. The protein is Heme A synthase of Lysinibacillus sphaericus (strain C3-41).